The primary structure comprises 301 residues: uncharacterized protein (301 aa).

At 1–5 (MSYKK) the chain is on the extracellular side. Residues 6–26 (FVYFINLFFLLGATLLTFFLI) form a helical membrane-spanning segment. Residues 27–112 (LAGGRTTGVL…NRNAYYYLSR (86 aa)) are Cytoplasmic-facing. A helical transmembrane segment spans residues 113-133 (VGWAMLLIGLFFLLITLVSVI). Residues 134 to 143 (ASLIRYNRRT) are Extracellular-facing. The helical transmembrane segment at 144–164 (AALATAMSWITLFFITLSACL) threads the bilayer. Residues 165 to 191 (YTGCYAKAVKAFHHENRDARLGPKNFG) lie on the Cytoplasmic side of the membrane. A helical transmembrane segment spans residues 192–212 (LIWTTVFLLIVNAICCTIMVA). The Extracellular segment spans residues 213-301 (THKRNEYIYD…YTEQNVPVVS (89 aa)). Positions 254–301 (VQQSQSHQNHRFFKKLRTKKRTVTSAGDEPDRVQEERVYTEQNVPVVS) are disordered. Over residues 261–275 (QNHRFFKKLRTKKRT) the composition is skewed to basic residues. Basic and acidic residues predominate over residues 282-292 (EPDRVQEERVY).

This sequence belongs to the SUR7 family.

It is found in the cell membrane. Its function is as follows. Involved in sporulation and affects the sphingolipid composition of the plasma membrane. This is an uncharacterized protein from Saccharomyces cerevisiae (strain ATCC 204508 / S288c) (Baker's yeast).